The primary structure comprises 224 residues: Oxalate oxidase 2 (224 aa).

The first 23 residues, Met-1–Ala-23, serve as a signal peptide directing secretion. Residues Cys-33 and Cys-49 are joined by a disulfide bond. The region spanning Ser-63 to Glu-214 is the Cupin type-1 domain. Residues Asn-70 and Asn-75 are each glycosylated (N-linked (GlcNAc...) asparagine). Residues His-111, His-113, Glu-118, and His-160 each contribute to the Mn(2+) site.

It belongs to the germin family. Oligomer (believed to be a pentamer but probably hexamer). Post-translationally, glycosylated. A form called G contains antennary GlcNAc residues, whereas a form called G' lacks antennary GlcNAc residues in its otherwise identical glycans. In terms of tissue distribution, root.

The protein localises to the secreted. It localises to the extracellular space. Its subcellular location is the apoplast. It is found in the cell wall. The enzyme catalyses oxalate + O2 + 2 H(+) = H2O2 + 2 CO2. Releases hydrogen peroxide in the apoplast. May play an important role in several aspects of plant growth and defense mechanisms. This chain is Oxalate oxidase 2, found in Hordeum vulgare (Barley).